The chain runs to 53 residues: Light-harvesting protein B-808/866 beta chain (53 aa).

M1 bears the N-formylmethionine mark. The Cytoplasmic portion of the chain corresponds to 1-25; it reads MRDDDDLVPPKWRPLFNNQDWLLHD. A bacteriochlorophyll contacts are provided by H24 and H42. A helical transmembrane segment spans residues 26 to 48; that stretch reads IVVKSFYGFGVIAAIAHLLVYLW. The Periplasmic portion of the chain corresponds to 49 to 53; it reads KPWLP.

This sequence belongs to the antenna complex beta subunit family. As to quaternary structure, the core complex is formed by different alpha and beta chains, binding bacteriochlorophyll molecules, and arranged most probably in tetrameric structures disposed around the reaction center. The non-pigmented gamma chains may constitute additional components.

The protein localises to the cell membrane. Its function is as follows. Antenna complexes are light-harvesting systems, which transfer the excitation energy to the reaction centers. In Chloroflexus aurantiacus (strain ATCC 29366 / DSM 635 / J-10-fl), this protein is Light-harvesting protein B-808/866 beta chain (puf2B).